The primary structure comprises 488 residues: MLVLHPALYEIIVRARDWRLLDEVAKELGMQAESLMRYVEEGRAKGVLQVEKKVVEVYELTEEGRRRAAEGLPEYNFLKSATCDGGRCVVSLSHPEAGVALANLAKFGVRPRGGVVELDEETYRKILSAVEEKQRYLSALEGAPRDVLQEFARRRIVRRVERTLIYVKAAVPPESVRPAEVKTAITSADIATGRWRTYLLKPFDLGVEPPEYPAPVPHFFNEFLDYVREVMIGLGFEEVRGPVLEVEFWNFDALFQAQDHPAREVHDTFYIRWEGPIEAPPEHLLEAVGRVHEEKWRYKWSREKALNPVLRTQTTAVTIRALAERGDGEYKVFTIGRVFRPEKLDPKHSMEFHQLDGIVVGPGLTFKHLLGQLEQIAKALGMTRVRFRPAYFPFTSPSVEVYAEHPKLGWVEFGGAGIFRPEVTEPLGVRKSRVLAWGWGLDRIAMILLGIDDIRELFTKDPEKLREYYARWVKYRSATGSTGKSYTL.

L-phenylalanine contacts are provided by residues Thr315, Gln354 to Asp356, Phe394, and Phe419.

It belongs to the class-II aminoacyl-tRNA synthetase family. Phe-tRNA synthetase alpha subunit type 2 subfamily. In terms of assembly, tetramer of two alpha and two beta subunits. Mg(2+) serves as cofactor.

The protein localises to the cytoplasm. It catalyses the reaction tRNA(Phe) + L-phenylalanine + ATP = L-phenylalanyl-tRNA(Phe) + AMP + diphosphate + H(+). The polypeptide is Phenylalanine--tRNA ligase alpha subunit (Pyrobaculum arsenaticum (strain DSM 13514 / JCM 11321 / PZ6)).